The primary structure comprises 296 residues: Nicotinate dehydrogenase FAD-subunit (296 aa).

Residues 1–179 (MKDFEFFAPK…TEVIIDRPDA (179 aa)) enclose the FAD-binding PCMH-type domain. Residues 29-36 (IIAGGTDL), glycine 101, 110-114 (TIGGN), aspartate 123, arginine 160, methionine 169, and lysine 187 contribute to the FAD site.

In terms of assembly, heterooctamer of NDHM, NDHL, NDHS and NDHF. Dimer of heterotetramers. FAD serves as cofactor.

It catalyses the reaction nicotinate + NADP(+) + H2O = 6-hydroxynicotinate + NADPH + H(+). It participates in cofactor degradation; nicotinate degradation; 6-hydroxynicotinate from nicotinate: step 1/1. Reversibly inactivated by selenide and sulfide. Not inhibited by cyanide. Its function is as follows. Catalyzes the hydroxylation of nicotinate to 6-hydroxynicotinate. Also active against 2-pyrazinecarboxylic acid, but inactive against other nicotinate analogs. The polypeptide is Nicotinate dehydrogenase FAD-subunit (ndhF) (Eubacterium barkeri (Clostridium barkeri)).